An 829-amino-acid chain; its full sequence is uncharacterized protein (829 aa).

Belongs to the IIV-6 050L family.

This is an uncharacterized protein from Invertebrate iridescent virus 3 (IIV-3).